The chain runs to 312 residues: Homoserine O-succinyltransferase (312 aa).

Cysteine 142 serves as the catalytic Acyl-thioester intermediate. Substrate-binding residues include lysine 163 and serine 192. Residue histidine 235 is the Proton acceptor of the active site. Glutamate 237 is a catalytic residue. Arginine 249 contributes to the substrate binding site.

This sequence belongs to the MetA family.

The protein resides in the cytoplasm. It catalyses the reaction L-homoserine + succinyl-CoA = O-succinyl-L-homoserine + CoA. The protein operates within amino-acid biosynthesis; L-methionine biosynthesis via de novo pathway; O-succinyl-L-homoserine from L-homoserine: step 1/1. In terms of biological role, transfers a succinyl group from succinyl-CoA to L-homoserine, forming succinyl-L-homoserine. This chain is Homoserine O-succinyltransferase, found in Alteromonas mediterranea (strain DSM 17117 / CIP 110805 / LMG 28347 / Deep ecotype).